The primary structure comprises 641 residues: Pre-mRNA-processing factor 39 (641 aa).

The interval 1 to 50 (MEKSPEHCAEGSPSPATESAPSATEPPLPSTEPPLPSTEPPLPSTEPPLP) is disordered. Over residues 10–23 (EGSPSPATESAPSA) the composition is skewed to low complexity. Over residues 24-50 (TEPPLPSTEPPLPSTEPPLPSTEPPLP) the composition is skewed to pro residues. 7 HAT repeats span residues 50–82 (PPLP…YVEQ), 84–116 (NHLF…LEKK), 118–150 (NNIL…FLKE), 158–193 (ETSL…WETE), 304–336 (NFEE…FELE), 338–370 (GSNE…YMEN), and 372–407 (SVEG…QQGN).

This sequence belongs to the PRP39 family.

The protein resides in the nucleus. Its function is as follows. Involved in pre-mRNA splicing. In Xenopus laevis (African clawed frog), this protein is Pre-mRNA-processing factor 39 (prpf39).